The chain runs to 414 residues: Arrestin domain-containing protein 3 (414 aa).

2 consecutive short sequence motifs (PPxY motif) follow at residues 346–349 (PPSY) and 391–394 (PPLY). Residues 393 to 414 (LYSEIDPNPDQSSEDRPSCPSR) form a disordered region. A compositionally biased stretch (basic and acidic residues) spans 405–414 (SEDRPSCPSR).

It belongs to the arrestin family. Interacts (via PPxY motifs) with NEDD4 (via WW domains). Interacts with ADRB2. Interacts with ADRB3. Interacts with HGS (via PPxY motifs). Does not bind TXN (thioredoxin). Interacts with ITCH.

It is found in the cytoplasm. It localises to the cell membrane. Its subcellular location is the lysosome. The protein localises to the endosome. The protein resides in the early endosome. Its function is as follows. Adapter protein that plays a role in regulating cell-surface expression of adrenergic receptors and probably also other G protein-coupled receptors. Plays a role in NEDD4-mediated ubiquitination and endocytosis af activated ADRB2 and subsequent ADRB2 degradation. May recruit NEDD4 to ADRB2. Alternatively, may function as adapter protein that does not play a major role in recruiting NEDD4 to ADRB2, but rather plays a role in a targeting ADRB2 to endosomes. The chain is Arrestin domain-containing protein 3 (Arrdc3) from Rattus norvegicus (Rat).